The primary structure comprises 2147 residues: Probable serine/threonine-protein kinase roco6 (2147 aa).

At 1-1055 (MNSIHKQHYT…LDHSRVEFNR (1055 aa)) the chain is on the extracellular side. 11 LRR repeats span residues 69–89 (DMKYLDLSKRMIYSLELMMIP), 101–122 (SISILNLNDNLLGEIPESLKQL), 124–145 (QLISLSIRGNHILEIPLWFPEE), 148–169 (LLRKLDVSHNAISSVPNTFNKF), 171–192 (ILEDLNLSNNYISYIHPSLFPE), 193–214 (GIMRLNLSNNLFREVELPPWFE), 215–236 (SLLTLDISGNKLKHLGNLPFHL), 237–256 (VRVSIDDNHLESIDHKVILR), 306–328 (HLTHLDLSGNCISVLPPELANLT), 329–350 (ELVRLDLSFNILTTLPLYIVSY), and 352–372 (RLEHLDLQGTLDTLVSPPRRI). The Roc domain maps to 390–750 (QGEPSYRVKL…DLLKKTVVEL (361 aa)). Residues 390 to 750 (QGEPSYRVKL…DLLKKTVVEL (361 aa)) form a small GTPase-like region. Position 403-410 (403-410 (GQENVGKT)) interacts with GTP. 2 disordered regions span residues 491-582 (NSNG…VGTN) and 602-621 (SNLSIGGSNGNNNNNSGGSG). 4 stretches are compositionally biased toward low complexity: residues 492–512 (SNGVNSNSQININSSSGNIHS), 519–531 (NVNSSGGIHSNNS), 539–568 (NSFLNNTNSNGTNNNSSNLNINTNSNNVNS), and 602–617 (SNLSIGGSNGNNNNNS). GTP contacts are provided by residues 634 to 638 (DCAGQ) and 691 to 694 (THLD). The 135-residue stretch at 758–892 (PELYLKLEKL…RFELMFPLDS (135 aa)) folds into the COR domain. 2 stretches are compositionally biased toward low complexity: residues 905 to 941 (GNSYVNNNNNNNNNSNNNNNGSNKSSPFKTTPSSPST) and 960 to 977 (SGNNSSSKNSTSTKRSIS). The disordered stretch occupies residues 905 to 995 (GNSYVNNNNN…NSDLDLIGGG (91 aa)). One copy of the WD 1 repeat lies at 1051-1098 (VEFNRWIQLSFAPAGLFSRLLIRLLISKEFDMKPILYWRNGVVVESQS). Residues 1056-1076 (WIQLSFAPAGLFSRLLIRLLI) traverse the membrane as a helical segment. Over 1077–2147 (SKEFDMKPIL…CGTNNVCIWS (1071 aa)) the chain is Cytoplasmic. LRR repeat units lie at residues 1237–1263 (ILSIKPASFGNNQIQFEVRVPPSPPPP), 1274–1297 (DDNITTTTLAVNNIKVLESGGSQP), and 1325–1348 (ESSLIQVEFDHNNQTLVISGTYKY). The region spanning 1356 to 1627 (FESPKLIGRG…KIVKRIKQII (272 aa)) is the Protein kinase domain. ATP-binding positions include 1362–1370 (IGRGASGKI) and lysine 1383. The Proton acceptor role is filled by aspartate 1481. Positions 1653–1699 (ADSQPFHYHQQQQPSLNSTNQLQQQQYSSVLTSPRSNLSDSSNSSQN) are disordered. Low complexity predominate over residues 1662-1699 (QQQQPSLNSTNQLQQQQYSSVLTSPRSNLSDSSNSSQN). WD repeat units follow at residues 1735 to 1774 (QPEAKVNQLVWEVNSRRVWGGCESGEIIVWNAENGNQIFR) and 1778 to 1820 (LHPG…LDDQ). One can recognise a PH domain in the interval 1821 to 1923 (SGTKSDFITK…WLTAINRVIN (103 aa)). The WD 4 repeat unit spans residues 2031 to 2068 (HYSKPITSMALVEKNVWISCEDESLSVWDGDTGSFIRK).

This sequence belongs to the protein kinase superfamily. TKL Ser/Thr protein kinase family. ROCO subfamily.

It localises to the membrane. The enzyme catalyses L-seryl-[protein] + ATP = O-phospho-L-seryl-[protein] + ADP + H(+). The catalysed reaction is L-threonyl-[protein] + ATP = O-phospho-L-threonyl-[protein] + ADP + H(+). Its function is as follows. May act as a serine/threonine-protein kinase and guanine-nucleotide releasing factor. The protein is Probable serine/threonine-protein kinase roco6 (roco6) of Dictyostelium discoideum (Social amoeba).